The primary structure comprises 366 residues: Probable neutral protease 2 homolog B (366 aa).

The signal sequence occupies residues 1–19 (MQVIVALAALSSLAAPALG). Positions 20–189 (FSIPRGVPVS…RGPRSRITKR (170 aa)) are excised as a propeptide. Intrachain disulfides connect Cys-197–Cys-267, Cys-274–Cys-292, and Cys-306–Cys-366. Position 317 (His-317) interacts with Zn(2+). Glu-318 is an active-site residue. The Zn(2+) site is built by His-321 and Asp-332.

This sequence belongs to the peptidase M35 family. Zn(2+) is required as a cofactor.

The protein resides in the secreted. The catalysed reaction is Preferential cleavage of bonds with hydrophobic residues in P1'. Also 3-Asn-|-Gln-4 and 8-Gly-|-Ser-9 bonds in insulin B chain.. Its function is as follows. Probable secreted metalloprotease that shows high activities on basic nuclear substrates such as histone and protamine. May be involved in virulence. This is Probable neutral protease 2 homolog B (NpII-B) from Trichophyton rubrum (Athlete's foot fungus).